Consider the following 864-residue polypeptide: Leucine--tRNA ligase (864 aa).

A 'HIGH' region motif is present at residues 42–52 (PYPSGKLHMGH). Positions 624–628 (KMSKS) match the 'KMSKS' region motif. K627 provides a ligand contact to ATP.

Belongs to the class-I aminoacyl-tRNA synthetase family.

The protein resides in the cytoplasm. It catalyses the reaction tRNA(Leu) + L-leucine + ATP = L-leucyl-tRNA(Leu) + AMP + diphosphate. The protein is Leucine--tRNA ligase of Burkholderia mallei (strain NCTC 10229).